The primary structure comprises 418 residues: Gamma-glutamyl phosphate reductase (418 aa).

It belongs to the gamma-glutamyl phosphate reductase family.

It localises to the cytoplasm. The catalysed reaction is L-glutamate 5-semialdehyde + phosphate + NADP(+) = L-glutamyl 5-phosphate + NADPH + H(+). The protein operates within amino-acid biosynthesis; L-proline biosynthesis; L-glutamate 5-semialdehyde from L-glutamate: step 2/2. Catalyzes the NADPH-dependent reduction of L-glutamate 5-phosphate into L-glutamate 5-semialdehyde and phosphate. The product spontaneously undergoes cyclization to form 1-pyrroline-5-carboxylate. The chain is Gamma-glutamyl phosphate reductase from Dechloromonas aromatica (strain RCB).